Here is a 343-residue protein sequence, read N- to C-terminus: Inositol 2-dehydrogenase (343 aa).

This sequence belongs to the Gfo/Idh/MocA family. As to quaternary structure, homotetramer.

It catalyses the reaction myo-inositol + NAD(+) = scyllo-inosose + NADH + H(+). Its function is as follows. Involved in the oxidation of myo-inositol (MI) to 2-keto-myo-inositol (2KMI or 2-inosose). The sequence is that of Inositol 2-dehydrogenase from Streptomyces avermitilis (strain ATCC 31267 / DSM 46492 / JCM 5070 / NBRC 14893 / NCIMB 12804 / NRRL 8165 / MA-4680).